The following is a 61-amino-acid chain: Phospholipase A2 (61 aa).

The Ca(2+) site is built by Tyr-27, Gly-29, and Gly-31. A disulfide bridge connects residues Cys-28 and Cys-35. Residue His-38 is part of the active site. Position 39 (Asp-39) interacts with Ca(2+). An intrachain disulfide couples Cys-41 to Cys-59. Residue Asp-60 is part of the active site.

This sequence belongs to the phospholipase A2 family. Group II subfamily. D49 sub-subfamily. In terms of assembly, homodimer. Ca(2+) serves as cofactor. In terms of tissue distribution, expressed by the venom gland.

The protein localises to the secreted. The enzyme catalyses a 1,2-diacyl-sn-glycero-3-phosphocholine + H2O = a 1-acyl-sn-glycero-3-phosphocholine + a fatty acid + H(+). Functionally, snake venom phospholipase A2 (PLA2) that displays edema-inducing activities. PLA2 catalyzes the calcium-dependent hydrolysis of the 2-acyl groups in 3-sn-phosphoglycerides. In Crotalus atrox (Western diamondback rattlesnake), this protein is Phospholipase A2.